A 252-amino-acid chain; its full sequence is Mannose-P-dolichol utilization defect 1 protein homolog (252 aa).

The region spanning 34–100 (KALLSKGLGL…HGYPFSAWGD (67 aa)) is the PQ-loop 1 domain. A run of 7 helical transmembrane segments spans residues 41-61 (LGLA…LKIL), 69-89 (INIV…SYNF), 98-118 (WGDS…VLFF), 126-146 (GLFL…LTPM), 148-168 (VLFT…LSQA), 180-200 (LSAA…FTSI), and 207-227 (MIIL…GQLI). In terms of domain architecture, PQ-loop 2 spans 157-211 (IPILLVGKLSQAYTNYQAGSTGQLSAATVIMMFAGSVARIFTSIQETGDFMIILT).

This sequence belongs to the MPDU1 (TC 2.A.43.3) family.

The protein localises to the membrane. The sequence is that of Mannose-P-dolichol utilization defect 1 protein homolog from Drosophila melanogaster (Fruit fly).